A 452-amino-acid chain; its full sequence is AP-4 complex subunit mu-1 (452 aa).

The MHD domain maps to 184–451 (KNEVFLDVVE…LSHSDAYVIR (268 aa)).

This sequence belongs to the adaptor complexes medium subunit family. In terms of assembly, adaptor protein complex 4 (AP-4) is a heterotetramer composed of two large adaptins (epsilon-type subunit AP4E1 and beta-type subunit AP4B1), a medium adaptin (mu-type subunit AP4M1) and a small adaptin (sigma-type AP4S1). Interacts with tyrosine-based sorting signals on the cytoplasmic tail of cargo proteins such as APP, ATG9A, LAMP2 and NAGPA. Interacts with the C-terminal domain of GRID2. Interacts with GRIA1 and GRIA2; the interaction is indirect via CACNG3. Interacts with CACNG3; CACNG3 associates GRIA1 and GRIA2 with the adaptor protein complex 4 (AP-4) to target them to the somatodendritic compartment of neurons. Interacts with HOOK1 and HOOK2; the interactions are direct, mediate the interaction between FTS-Hook-FHIP (FHF) complex and AP-4 and the perinuclear distribution of AP-4.

It is found in the golgi apparatus. The protein resides in the trans-Golgi network membrane. It localises to the early endosome. Its function is as follows. Component of the adaptor protein complex 4 (AP-4). Adaptor protein complexes are vesicle coat components involved both in vesicle formation and cargo selection. They control the vesicular transport of proteins in different trafficking pathways. AP-4 forms a non clathrin-associated coat on vesicles departing the trans-Golgi network (TGN) and may be involved in the targeting of proteins from the trans-Golgi network (TGN) to the endosomal-lysosomal system. It is also involved in protein sorting to the basolateral membrane in epithelial cells and the proper asymmetric localization of somatodendritic proteins in neurons. Within AP-4, the mu-type subunit AP4M1 is directly involved in the recognition and binding of tyrosine-based sorting signals found in the cytoplasmic part of cargos. The adaptor protein complex 4 (AP-4) may also recognize other types of sorting signal. The chain is AP-4 complex subunit mu-1 from Bos taurus (Bovine).